Consider the following 165-residue polypeptide: Large ribosomal subunit protein uL10 (165 aa).

Belongs to the universal ribosomal protein uL10 family. Part of the ribosomal stalk of the 50S ribosomal subunit. The N-terminus interacts with L11 and the large rRNA to form the base of the stalk. The C-terminus forms an elongated spine to which L12 dimers bind in a sequential fashion forming a multimeric L10(L12)X complex.

Functionally, forms part of the ribosomal stalk, playing a central role in the interaction of the ribosome with GTP-bound translation factors. The protein is Large ribosomal subunit protein uL10 (rplJ) of Halalkalibacterium halodurans (strain ATCC BAA-125 / DSM 18197 / FERM 7344 / JCM 9153 / C-125) (Bacillus halodurans).